The primary structure comprises 320 residues: MKLALSLFLLSGSLAQYSNPGACSGDCWGHDPGFYQRVSDGRYYRFSTGGGIQIHASDNLEGPWEAVGEALPGGSVVDHAGSTNLWAPDIHYEASTNLYYMYYSVSTLGSRDSVIGVATSPNLQPNWTDHGALFRSQAGGNYNAIDANWASIGGSPILTFGSYWNGIHQLPLAGPLSLADGATPTQIAYNSSGNHAIEAGFVFYRRGWYYLTFSSGRAGSYDTNPPATGEEYRIVVCRSASGTGDFVDKSGRSCLTDNGGTTILASHGNVYGPGGQGVFEDRTRGWVLYYHYANPDIGLSTGQYQFGWNVLQWADGWPSV.

An N-terminal signal peptide occupies residues methionine 1 to alanine 15. The Proton acceptor role is filled by aspartate 31. Asparagine 126 and asparagine 190 each carry an N-linked (GlcNAc...) asparagine glycan. Residue glutamate 198 is the Proton donor of the active site.

It belongs to the glycosyl hydrolase 43 family.

It localises to the secreted. It carries out the reaction Endohydrolysis of (1-&gt;5)-alpha-arabinofuranosidic linkages in (1-&gt;5)-arabinans.. It functions in the pathway glycan metabolism; L-arabinan degradation. Functionally, endo-1,5-alpha-L-arabinanase involved in degradation of pectin. Its preferred substrate is linear 1,5-alpha-L-arabinan. In Emericella nidulans (strain FGSC A4 / ATCC 38163 / CBS 112.46 / NRRL 194 / M139) (Aspergillus nidulans), this protein is Arabinan endo-1,5-alpha-L-arabinosidase C (abnC).